We begin with the raw amino-acid sequence, 54 residues long: UPF0391 membrane protein TERTU_3637 (54 aa).

A run of 2 helical transmembrane segments spans residues Trp-4–Ala-24 and Ser-29–Gly-49.

Belongs to the UPF0391 family.

The protein localises to the cell membrane. This Teredinibacter turnerae (strain ATCC 39867 / T7901) protein is UPF0391 membrane protein TERTU_3637.